Reading from the N-terminus, the 383-residue chain is Chaperone protein DnaJ (383 aa).

The J domain occupies 5-70; the sequence is DYYDVLGVSK…DKKAAYDRYG (66 aa). Residues 142–220 form a CR-type zinc finger; sequence GMQKTISVPG…CRGAGREEKT (79 aa). Cysteine 155, cysteine 158, cysteine 172, cysteine 175, cysteine 194, cysteine 197, cysteine 208, and cysteine 211 together coordinate Zn(2+). 4 CXXCXGXG motif repeats span residues 155–162, 172–179, 194–201, and 208–215; these read CSACEGTG, CPTCSGMG, and CQACRGAG.

This sequence belongs to the DnaJ family. As to quaternary structure, homodimer. It depends on Zn(2+) as a cofactor.

The protein resides in the cytoplasm. In terms of biological role, participates actively in the response to hyperosmotic and heat shock by preventing the aggregation of stress-denatured proteins and by disaggregating proteins, also in an autonomous, DnaK-independent fashion. Unfolded proteins bind initially to DnaJ; upon interaction with the DnaJ-bound protein, DnaK hydrolyzes its bound ATP, resulting in the formation of a stable complex. GrpE releases ADP from DnaK; ATP binding to DnaK triggers the release of the substrate protein, thus completing the reaction cycle. Several rounds of ATP-dependent interactions between DnaJ, DnaK and GrpE are required for fully efficient folding. Also involved, together with DnaK and GrpE, in the DNA replication of plasmids through activation of initiation proteins. The sequence is that of Chaperone protein DnaJ from Dinoroseobacter shibae (strain DSM 16493 / NCIMB 14021 / DFL 12).